A 31-amino-acid polypeptide reads, in one-letter code: Photosystem I reaction center subunit XII (31 aa).

A helical transmembrane segment spans residues 7-26 (QIYIALLTALIPAFFALKLG).

It belongs to the PsaM family.

The protein localises to the plastid. The protein resides in the chloroplast thylakoid membrane. This chain is Photosystem I reaction center subunit XII, found in Euglena mutabilis.